The chain runs to 284 residues: 2,3,4,5-tetrahydropyridine-2,6-dicarboxylate N-succinyltransferase (284 aa).

Residues R111 and D148 each contribute to the substrate site.

Belongs to the transferase hexapeptide repeat family. As to quaternary structure, homotrimer.

It localises to the cytoplasm. The catalysed reaction is (S)-2,3,4,5-tetrahydrodipicolinate + succinyl-CoA + H2O = (S)-2-succinylamino-6-oxoheptanedioate + CoA. The protein operates within amino-acid biosynthesis; L-lysine biosynthesis via DAP pathway; LL-2,6-diaminopimelate from (S)-tetrahydrodipicolinate (succinylase route): step 1/3. The protein is 2,3,4,5-tetrahydropyridine-2,6-dicarboxylate N-succinyltransferase of Mesorhizobium japonicum (strain LMG 29417 / CECT 9101 / MAFF 303099) (Mesorhizobium loti (strain MAFF 303099)).